Consider the following 359-residue polypeptide: Methyltransferase eqxD (359 aa).

Residues Gly-198–Gly-199, Asp-224, Ser-248–Phe-249, Arg-264, and Arg-265 contribute to the S-adenosyl-L-methionine site.

It belongs to the class I-like SAM-binding methyltransferase superfamily. Cation-independent O-methyltransferase family.

It catalyses the reaction trichosetin + S-adenosyl-L-methionine = equisetin + S-adenosyl-L-homocysteine + H(+). The protein operates within mycotoxin biosynthesis. Functionally, methyltransferase; part of the gene cluster that mediates the biosynthesis of equisetin, a trans-fused decalin-containing tetramic acid with antimicrobial activity. The PKS module of eqxS together with the enoylreductase eqxC catalyze the formation of the polyketide unit which is then conjugated to L-serine by the condensation domain of the eqxS NRPS module. Activity of the Dieckmann cyclase domain (RED) results in release of the Dieckmann product intermediate. Diels-Alderase eqx3 is involved in endo-selective Diels-Alder cycloaddition to form the decalin ring, leading to the production of N-desmethylequisetin also called trichosetin. Subsequent N-methylation is carried out by eqxD to give equisetin. The polypeptide is Methyltransferase eqxD (Fusarium heterosporum).